Consider the following 103-residue polypeptide: Small ribosomal subunit protein uS10 (103 aa).

This sequence belongs to the universal ribosomal protein uS10 family. In terms of assembly, part of the 30S ribosomal subunit.

In terms of biological role, involved in the binding of tRNA to the ribosomes. This is Small ribosomal subunit protein uS10 from Shewanella amazonensis (strain ATCC BAA-1098 / SB2B).